Reading from the N-terminus, the 292-residue chain is Nucleotide-binding protein AZOSEA20610 (292 aa).

Position 8–15 (8–15) interacts with ATP; sequence GLSGSGKS. 57–60 is a binding site for GTP; sequence DVRS.

It belongs to the RapZ-like family.

Displays ATPase and GTPase activities. In Aromatoleum aromaticum (strain DSM 19018 / LMG 30748 / EbN1) (Azoarcus sp. (strain EbN1)), this protein is Nucleotide-binding protein AZOSEA20610.